Here is a 750-residue protein sequence, read N- to C-terminus: Iron-sulfur clusters transporter ATM1, mitochondrial (750 aa).

The N-terminal 16 residues, 1–16 (MFIRNVKLIKPSPVRF), are a transit peptide targeting the mitochondrion. Topologically, residues 17 to 124 (ISPIPFSFPI…PKNNLNFKIR (108 aa)) are mitochondrial matrix. Low complexity-rich tracts occupy residues 43–75 (TSNF…KTLS) and 87–100 (DNDT…SSEN). Positions 43–100 (TSNFKSTSSSSSLKSTSTSTSTSTSKTTPKTLSKPPPKVKPPIQDNDTTSSGSSSSEN) are disordered. A helical membrane pass occupies residues 125-146 (VIIALSLLVGAKILNVQVPFYF). Positions 125–415 (VIIALSLLVG…LGSVYRELKQ (291 aa)) constitute an ABC transmembrane type-1 domain. Topologically, residues 147–169 (KQIIDTMNIDWTNEVGVFSTVIG) are mitochondrial intermembrane. A helical membrane pass occupies residues 170-193 (SLILAYGGARFGAVLFGELRNAIF). Residues 194 to 242 (ASVAQSAIRRVAYNTFVKLLNMDLQFHLSRQTGGLTRAIDRGTKGISYV) lie on the Mitochondrial matrix side of the membrane. A helical membrane pass occupies residues 243 to 266 (LSAMVFHIIPITLEISIVCGILTY). Asn267 is a topological domain (mitochondrial intermembrane). Residues 268–288 (YGASFAAMTFVTMLAYSIFTI) traverse the membrane as a helical segment. The Mitochondrial matrix portion of the chain corresponds to 289-354 (QTTAWRTKFR…SSVKIATSLA (66 aa)). Glutathione contacts are provided by residues 294 to 298 (RTKFR) and 357 to 360 (NSGQ). The helical transmembrane segment at 355 to 373 (FLNSGQNFIFTSALTAMMY) threads the bilayer. Over 374–388 (MGCQGVYTGELTVGD) the chain is Mitochondrial intermembrane. The helical transmembrane segment at 389–410 (LVLINQLVFQLSVPLNFLGSVY) threads the bilayer. Gly407 provides a ligand contact to glutathione. The Mitochondrial matrix portion of the chain corresponds to 411 to 750 (RELKQSLLDM…LFNSQTFEKK (340 aa)). The segment at 437-462 (PNAPPLKLNNNNNNNNNNNNNNNNSL) is disordered. Positions 445-460 (NNNNNNNNNNNNNNNN) are enriched in low complexity. The ABC transporter domain maps to 466 to 702 (IRFENVSFGY…QPNSLYAQLW (237 aa)). Residues Tyr475 and 499-510 (GPSGSGKSTILR) each bind ATP.

The protein belongs to the ABC transporter superfamily. ABCB family. Heavy Metal importer (TC 3.A.1.210) subfamily. As to quaternary structure, homodimer.

It is found in the mitochondrion inner membrane. In terms of biological role, performs an essential function in the generation of cytoplasmic iron-sulfur proteins by mediating the ATP-dependent export of Fe/S cluster precursors synthesized by NFS1 and other mitochondrial proteins. Hydrolyzes ATP. Binds glutathione and may function by transporting a glutathione-conjugated iron-sulfur compound. This is Iron-sulfur clusters transporter ATM1, mitochondrial from Candida albicans (strain SC5314 / ATCC MYA-2876) (Yeast).